Here is a 298-residue protein sequence, read N- to C-terminus: Protein ILRUN (298 aa).

The disordered stretch occupies residues 199-277 (NTQPHRKVEG…SVNLSPSSHA (79 aa)). Serine 215 and serine 222 each carry phosphoserine. Low complexity predominate over residues 242 to 255 (TWAPAPDTWAPAPD). Residues 262–277 (NRLSQNSVNLSPSSHA) show a composition bias toward polar residues. Serine 272 carries the phosphoserine modification.

In terms of assembly, interacts with IRF3; the interaction inhibits IRF3 binding to its DNA consensus sequence. As to expression, expressed in lung (at protein level).

Its subcellular location is the cytoplasm. The protein localises to the nucleus. Negative regulator of innate antiviral response. Blocks IRF3-dependent cytokine production such as IFNA, IFNB and TNF. Interacts with IRF3 and inhibits IRF3 recruitment to type I IFN promoter sequences while also reducing nuclear levels of the coactivators EP300 and CREBBP. The sequence is that of Protein ILRUN from Homo sapiens (Human).